Consider the following 380-residue polypeptide: Bifunctional enzyme IspD/IspF (380 aa).

Residues 1–224 (MTIPATYAAI…ERILGDAMDI (224 aa)) form a 2-C-methyl-D-erythritol 4-phosphate cytidylyltransferase region. Positions 225-380 (RLGNGFDVHA…SIATATLVKG (156 aa)) are 2-C-methyl-D-erythritol 2,4-cyclodiphosphate synthase. Asp-231 and His-233 together coordinate a divalent metal cation. 4-CDP-2-C-methyl-D-erythritol 2-phosphate-binding positions include 231–233 (DVH) and 257–258 (HS). An a divalent metal cation-binding site is contributed by His-265. Residues 279-281 (DIG), 355-358 (TTSE), Phe-362, and Arg-365 each bind 4-CDP-2-C-methyl-D-erythritol 2-phosphate.

The protein in the N-terminal section; belongs to the IspD/TarI cytidylyltransferase family. IspD subfamily. In the C-terminal section; belongs to the IspF family. The cofactor is a divalent metal cation.

The enzyme catalyses 2-C-methyl-D-erythritol 4-phosphate + CTP + H(+) = 4-CDP-2-C-methyl-D-erythritol + diphosphate. It catalyses the reaction 4-CDP-2-C-methyl-D-erythritol 2-phosphate = 2-C-methyl-D-erythritol 2,4-cyclic diphosphate + CMP. It functions in the pathway isoprenoid biosynthesis; isopentenyl diphosphate biosynthesis via DXP pathway; isopentenyl diphosphate from 1-deoxy-D-xylulose 5-phosphate: step 2/6. Its pathway is isoprenoid biosynthesis; isopentenyl diphosphate biosynthesis via DXP pathway; isopentenyl diphosphate from 1-deoxy-D-xylulose 5-phosphate: step 4/6. Bifunctional enzyme that catalyzes the formation of 4-diphosphocytidyl-2-C-methyl-D-erythritol from CTP and 2-C-methyl-D-erythritol 4-phosphate (MEP) (IspD), and catalyzes the conversion of 4-diphosphocytidyl-2-C-methyl-D-erythritol 2-phosphate (CDP-ME2P) to 2-C-methyl-D-erythritol 2,4-cyclodiphosphate (ME-CPP) with a corresponding release of cytidine 5-monophosphate (CMP) (IspF). The sequence is that of Bifunctional enzyme IspD/IspF from Paracoccus denitrificans (strain Pd 1222).